A 53-amino-acid chain; its full sequence is UPF0337 protein LJ_0034.1 (53 aa).

The segment at 27 to 53 is disordered; sequence AREVEGKAQQAKGKVKSKATEVKEDLE. Basic and acidic residues predominate over residues 44 to 53; it reads KATEVKEDLE.

This sequence belongs to the UPF0337 (CsbD) family.

This chain is UPF0337 protein LJ_0034.1, found in Lactobacillus johnsonii (strain CNCM I-12250 / La1 / NCC 533).